We begin with the raw amino-acid sequence, 207 residues long: Guanylate kinase (207 aa).

The Guanylate kinase-like domain maps to 3–181 (GLLFVVSAAS…ALHDLESVIT (179 aa)). 10–17 (AASGTGKT) provides a ligand contact to ATP.

The protein belongs to the guanylate kinase family.

The protein localises to the cytoplasm. The catalysed reaction is GMP + ATP = GDP + ADP. Functionally, essential for recycling GMP and indirectly, cGMP. The sequence is that of Guanylate kinase from Acinetobacter baylyi (strain ATCC 33305 / BD413 / ADP1).